A 660-amino-acid polypeptide reads, in one-letter code: Zeaxanthin epoxidase, chloroplastic (660 aa).

A chloroplast-targeting transit peptide spans 1 to 49 (MYASSARDGIPGKWCNARRKQLPLLISKDFPAELYHSLPCKSLENGHIK). Residues 79–107 (KVLV…LVFE) and 357–370 (TFSW…LLGD) contribute to the FAD site. One can recognise an FHA domain in the interval 545–609 (LVLSRDENMP…HGTWFIDNEG (65 aa)).

FAD serves as cofactor.

It is found in the plastid. It localises to the chloroplast membrane. The protein localises to the chloroplast thylakoid membrane. It carries out the reaction all-trans-zeaxanthin + 4 reduced [2Fe-2S]-[ferredoxin] + 2 O2 + 4 H(+) = all-trans-violaxanthin + 4 oxidized [2Fe-2S]-[ferredoxin] + 2 H2O. The enzyme catalyses all-trans-zeaxanthin + 2 reduced [2Fe-2S]-[ferredoxin] + O2 + 2 H(+) = all-trans-antheraxanthin + 2 oxidized [2Fe-2S]-[ferredoxin] + H2O. It catalyses the reaction all-trans-antheraxanthin + 2 reduced [2Fe-2S]-[ferredoxin] + O2 + 2 H(+) = all-trans-violaxanthin + 2 oxidized [2Fe-2S]-[ferredoxin] + H2O. The catalysed reaction is beta-cryptoxanthin + 2 reduced [2Fe-2S]-[ferredoxin] + O2 + 2 H(+) = (5R,6S)-5,6-epoxi-beta-cryptoxanthin + 2 oxidized [2Fe-2S]-[ferredoxin] + H2O. Its pathway is plant hormone biosynthesis; abscisate biosynthesis. In terms of biological role, converts zeaxanthin into antheraxanthin and subsequently violaxanthin. Also acts on beta-cryptoxanthin. Involved in the epoxidation of zeaxanthin. The chain is Zeaxanthin epoxidase, chloroplastic from Capsicum annuum (Capsicum pepper).